Reading from the N-terminus, the 885-residue chain is 3-hydroxy-3-methylglutaryl-coenzyme A reductase (885 aa).

The Cytoplasmic segment spans residues 1-9; that stretch reads MLSRLFRMH. A helical transmembrane segment spans residues 10–39; the sequence is GLFVASHPWEVIVGTVTLTICMMSMNMFTG. Topologically, residues 40–56 are lumenal; that stretch reads NDKICGWNYECPKFEED. Residues 57-78 form a helical membrane-spanning segment; that stretch reads VLSSDIIILTITRCIAILYIYF. In terms of domain architecture, SSD spans 61-218; sequence DIIILTITRC…MTFFPACVSL (158 aa). The INSIG-binding motif motif lies at 75–78; it reads YIYF. Topologically, residues 79 to 89 are cytoplasmic; sequence QFQNLRQLGSK. A Glycyl lysine isopeptide (Lys-Gly) (interchain with G-Cter in ubiquitin) cross-link involves residue Lys89. Residues 90–114 form a helical membrane-spanning segment; sequence YILGIAGLFTIFSSFVFSTVVIHFL. Residues 115-123 are Lumenal-facing; that stretch reads DKELTGLNE. The chain crosses the membrane as a helical span at residues 124–149; the sequence is ALPFFLLLIDLSRASALAKFALSSNS. Over 150–159 the chain is Cytoplasmic; that stretch reads QDEVRENIAR. The chain crosses the membrane as a helical span at residues 160–187; it reads GMAILGPTFTLDALVECLVIGVGTMSGV. The Lumenal segment spans residues 188 to 191; the sequence is RQLE. The chain crosses the membrane as a helical span at residues 192–220; it reads IMCCFGCMSVLATYFVFMTFFPACVSLVL. The Cytoplasmic segment spans residues 221–248; sequence ELSRESREGRPIWQLSHFARVLEGEENK. A Glycyl lysine isopeptide (Lys-Gly) (interchain with G-Cter in ubiquitin) cross-link involves residue Lys248. The helical transmembrane segment at 249-275 threads the bilayer; that stretch reads PNPVTQRVKIIMSLGLVLVHAHSRWIA. Topologically, residues 276-314 are lumenal; it reads DPSPQNSTADNSKVSLGLDENVSKRIEPSVSLWQFYLSK. N-linked (GlcNAc...) asparagine glycosylation is found at Asn281 and Asn296. A helical membrane pass occupies residues 315–339; sequence MISMDIEQVITLTLALLLAVKYIFF. Residues 340–885 lie on the Cytoplasmic side of the membrane; it reads EQAETESTLS…LQGTCTKKAA (546 aa). Residues Glu558, Lys688, and Asp764 each act as charge relay system in the active site. His863 functions as the Proton donor in the catalytic mechanism. Ser869 bears the Phosphoserine; by AMPK mark.

It belongs to the HMG-CoA reductase family. Homotetramer. Homodimer. Interacts (via its SSD) with INSIG1; the interaction, accelerated by sterols, leads to the recruitment of HMGCR to AMFR/gp78 for its ubiquitination by the sterol-mediated ERAD pathway. Interacts with UBIAD1. Undergoes sterol-mediated ubiquitination and ER-associated degradation (ERAD). Accumulation of sterols in the endoplasmic reticulum (ER) membrane, triggers binding of the reductase to the ER membrane protein INSIG1 or INSIG2. The INSIG1 binding leads to the recruitment of the ubiquitin ligase, AMFR/gp78, RNF139 or RNF145, initiating ubiquitination of the reductase. The ubiquitinated reductase is then extracted from the ER membrane and delivered to cytosolic 26S proteosomes by a mechanism probably mediated by the ATPase Valosin-containing protein VCP/p97. The INSIG2-binding leads to the recruitment of the ubiquitin ligase RNF139, initiating ubiquitination of the reductase. Lys-248 is the main site of ubiquitination. Ubiquitination is enhanced by the presence of a geranylgeranylated protein. Post-translationally, N-glycosylated. Deglycosylated by NGLY1 on release from the endoplasmic reticulum (ER) in a sterol-mediated manner. In terms of processing, phosphorylated. Phosphorylation at Ser-869 reduces the catalytic activity. As to expression, high expression found in liver, heart, kidney, bladder and subcutaneous fat. Lower levels in lung, uterus and large intestine. Lowest levels in cerebrum, spleen, spinal cord, stomach, ovary, longissimus muscle, and small intestine.

The protein resides in the endoplasmic reticulum membrane. The protein localises to the peroxisome membrane. It catalyses the reaction (R)-mevalonate + 2 NADP(+) + CoA = (3S)-3-hydroxy-3-methylglutaryl-CoA + 2 NADPH + 2 H(+). The protein operates within metabolic intermediate biosynthesis; (R)-mevalonate biosynthesis; (R)-mevalonate from acetyl-CoA: step 3/3. With respect to regulation, regulated by a negative feedback mechanism through sterols and non-sterol metabolites derived from mevalonate. Phosphorylation at Ser-869 down-regulates the catalytic activity. Functionally, catalyzes the conversion of (3S)-hydroxy-3-methylglutaryl-CoA (HMG-CoA) to mevalonic acid, the rate-limiting step in the synthesis of cholesterol and other isoprenoids, thus plays a critical role in cellular cholesterol homeostasis. This is 3-hydroxy-3-methylglutaryl-coenzyme A reductase (HMGCR) from Sus scrofa (Pig).